Consider the following 140-residue polypeptide: MSVEIPAEWKKFRYRGKSLEELLNMPMDDFIKLLPARQRRSLRKGFTPSERTLIEKIRKIRRDSKADKPIKTHVRSLVILPEMVGLKFAVYNGKQFVEFQVVPEMIGHYLGEFSIPIQKVEHGEPGLKATRSSLFMAMKG.

It belongs to the universal ribosomal protein uS19 family.

In terms of biological role, protein S19 forms a complex with S13 that binds strongly to the 16S ribosomal RNA. The chain is Small ribosomal subunit protein uS19 from Metallosphaera sedula (strain ATCC 51363 / DSM 5348 / JCM 9185 / NBRC 15509 / TH2).